A 348-amino-acid polypeptide reads, in one-letter code: Rhodopsin (348 aa).

An N-acetylmethionine modification is found at methionine 1. Residues 1–36 are Extracellular-facing; that stretch reads MNGTEGPNFYVPFSNKTGVVRSPFEAPQYYLAEPWQ. Asparagine 2 and asparagine 15 each carry an N-linked (GlcNAc...) asparagine glycan. Residues 37 to 61 form a helical membrane-spanning segment; it reads FSMLAAYMFLLIVLGFPINFLTLYV. Topologically, residues 62 to 73 are cytoplasmic; that stretch reads TVQHKKLRTPLN. Residues 74 to 96 form a helical membrane-spanning segment; it reads YILLNLAVADLFMVFGGFTTTLY. The Extracellular segment spans residues 97-110; sequence TSLHGYFVFGPTGC. Cysteine 110 and cysteine 187 form a disulfide bridge. Residues 111 to 133 form a helical membrane-spanning segment; it reads NLEGFFATLGGEIALWSLVVLAI. A 'Ionic lock' involved in activated form stabilization motif is present at residues 134–136; it reads ERY. Residues 134 to 152 lie on the Cytoplasmic side of the membrane; the sequence is ERYVVVCKPMSNFRFGENH. Residues 153 to 173 traverse the membrane as a helical segment; that stretch reads AIMGVAFTWVMALACAAPPLV. Topologically, residues 174 to 202 are extracellular; that stretch reads GWSRYIPQGMQCSCGALYFTLKPEINNES. Residue glutamate 201 coordinates Zn(2+). Residues 203-224 form a helical membrane-spanning segment; sequence FVIYMFVVHFSIPLIVIFFCYG. Residues 225–252 are Cytoplasmic-facing; the sequence is QLVFTVKEAAAQQQESATTQKAEKEVTR. A helical transmembrane segment spans residues 253-274; the sequence is MVIIMVIAFLICWLPYAGVAFY. Residues 275–286 lie on the Extracellular side of the membrane; it reads IFTHQGSDFGPI. Glutamine 279 lines the Zn(2+) pocket. Residues 287-308 traverse the membrane as a helical segment; sequence FMTIPAFFAKSSSVYNPVIYIM. Residue lysine 296 is modified to N6-(retinylidene)lysine. The Cytoplasmic segment spans residues 309-348; it reads MNKQFRNCMLTTLCCGKNPLGDDEASTTVSKTETSQVAPA. Residues cysteine 322 and cysteine 323 are each lipidated (S-palmitoyl cysteine). The segment at 330–348 is interaction with SAG; the sequence is DDEASTTVSKTETSQVAPA. Phosphoserine is present on serine 334. The residue at position 334 (serine 334) is a Phosphoserine; by RK and GRK7. Residues threonine 335 and threonine 336 each carry the phosphothreonine modification. Phosphothreonine; by RK and GRK7 occurs at positions 335 and 336. Serine 338 carries the phosphoserine; by RK and GRK7 modification. Phosphothreonine is present on residues threonine 340 and threonine 342. Serine 343 carries the post-translational modification Phosphoserine; by RK and GRK7.

Belongs to the G-protein coupled receptor 1 family. Opsin subfamily. Homodimer. May form a complex composed of RHO, GRK1 and RCVRN in a Ca(2+)-dependent manner; RCVRN prevents the interaction between GRK1 and RHO. Interacts with GRK1. Interacts (phosphorylated form) with SAG. Interacts with GNAT1. Interacts with GNAT3. SAG and G-proteins compete for a common binding site. Interacts with PRCD; the interaction promotes PRCD stability. Forms a complex with ASAP1 and ARF4. Forms a complex with ASAP1, RAB11A, Rabin8/RAB3IP, ARF4 and RAB11FIP3; the complex regulates Golgi-to-cilia rhodopsin/RHO transport in photoreceptors. In terms of processing, phosphorylated on some or all of the serine and threonine residues present in the C-terminal region. Post-translationally, contains one covalently linked retinal chromophore. Upon light absorption, the covalently bound 11-cis-retinal is converted to all-trans-retinal. After hydrolysis of the Schiff base and release of the covalently bound all-trans-retinal, active rhodopsin is regenerated by binding of a fresh molecule of 11-cis-retinal.

It is found in the membrane. It localises to the cell projection. The protein resides in the cilium. Its subcellular location is the photoreceptor outer segment. Its function is as follows. Photoreceptor required for image-forming vision at low light intensity. Required for photoreceptor cell viability after birth. Light-induced isomerization of 11-cis to all-trans retinal triggers a conformational change that activates signaling via G-proteins. Subsequent receptor phosphorylation mediates displacement of the bound G-protein alpha subunit by the arrestin SAG and terminates signaling. This Ovis aries (Sheep) protein is Rhodopsin (RHO).